The following is a 303-amino-acid chain: Acetylglutamate kinase (303 aa).

Residues 67–68, Arg-89, and Asn-193 contribute to the substrate site; that span reads GG.

It belongs to the acetylglutamate kinase family. ArgB subfamily.

Its subcellular location is the cytoplasm. It carries out the reaction N-acetyl-L-glutamate + ATP = N-acetyl-L-glutamyl 5-phosphate + ADP. It participates in amino-acid biosynthesis; L-arginine biosynthesis; N(2)-acetyl-L-ornithine from L-glutamate: step 2/4. In terms of biological role, catalyzes the ATP-dependent phosphorylation of N-acetyl-L-glutamate. The sequence is that of Acetylglutamate kinase from Acinetobacter baylyi (strain ATCC 33305 / BD413 / ADP1).